A 325-amino-acid chain; its full sequence is MGRRGKKKGRPVSGWVVLDKPVGMGSTEAVSKIKWLFQAEKAGHAGTLDPLASGMLPIALGEATKTVPYVQDGAKIYRFTVAWGQERSTDDLEGPVTKSSDLRPAEAEVKALLPKYTGVIMQTPPQFSAIKIAGERAYDLAREGETVDIPAREIEIGRLDIIEHHADHTVFEVECGKGTYVRSLARDMGRDLGCFGHISDLRRVEVEPFTSEDFVTIAELEAARFGAQGEDKPEPADDADAIDVPVDFGAIDALLVDTSAALDCLPQIAISDDAATKIRLGNPVIIRGRDAPVEAEEACATARGKLVAIGAIEQGMFKPKRVFAG.

Residue D49 is the Nucleophile of the active site.

Belongs to the pseudouridine synthase TruB family. Type 1 subfamily.

It catalyses the reaction uridine(55) in tRNA = pseudouridine(55) in tRNA. Functionally, responsible for synthesis of pseudouridine from uracil-55 in the psi GC loop of transfer RNAs. This chain is tRNA pseudouridine synthase B, found in Mesorhizobium japonicum (strain LMG 29417 / CECT 9101 / MAFF 303099) (Mesorhizobium loti (strain MAFF 303099)).